We begin with the raw amino-acid sequence, 75 residues long: MAGMNTENENRVEALEVRLAFQDELLDALNATVARQQKEIDLLQQQIRLLYQQFRNAQPDDAPGGSLRDDIPPHY.

This sequence belongs to the SlyX family.

The polypeptide is Protein SlyX homolog (Chromobacterium violaceum (strain ATCC 12472 / DSM 30191 / JCM 1249 / CCUG 213 / NBRC 12614 / NCIMB 9131 / NCTC 9757 / MK)).